We begin with the raw amino-acid sequence, 1151 residues long: Cation channel sperm-associated protein subunit gamma 1 (1151 aa).

The signal sequence occupies residues 1 to 38 (MVSRPAMSPVSPVWPRKPNLWAFWVLRLVLLLSLKSWA). Residues 39–1063 (EDTLQHCTWL…GLPLSSKRSS (1025 aa)) lie on the Extracellular side of the membrane. N-linked (GlcNAc...) asparagine glycosylation occurs at Asn-356. A helical transmembrane segment spans residues 1064 to 1084 (FIVMVSTSFFIALVVFYILFC). Over 1085–1151 (LVWPHIVKAW…NVQAKRAKVA (67 aa)) the chain is Cytoplasmic. Residues 1113-1123 (SSSSGGFTLHS) show a composition bias toward low complexity. Positions 1113–1151 (SSSSGGFTLHSHSSEGSFEGPSRPGTKEDNVQAKRAKVA) are disordered.

This sequence belongs to the CATSPERG family.

Its subcellular location is the membrane. This chain is Cation channel sperm-associated protein subunit gamma 1 (Catsperg1), found in Mus musculus (Mouse).